A 315-amino-acid polypeptide reads, in one-letter code: Protein-export membrane protein SecF (315 aa).

The next 6 membrane-spanning stretches (helical) occupy residues 35-55, 152-172, 181-201, 205-225, 242-264, and 282-302; these read MVLY…VHFP, QGIK…FLFF, IIFS…ILGI, TATI…NILL, LSAV…ILWL, and LLAD…WYIA.

The protein belongs to the SecD/SecF family. SecF subfamily. As to quaternary structure, part of the protein translocation apparatus. Forms a complex with SecD.

The protein resides in the cell membrane. Functionally, involved in protein export. This is Protein-export membrane protein SecF from Thermococcus gammatolerans (strain DSM 15229 / JCM 11827 / EJ3).